Here is a 323-residue protein sequence, read N- to C-terminus: Ribonuclease Z (323 aa).

Residues H62, H64, D66, H67, H140, D211, and H270 each contribute to the Zn(2+) site. D66 serves as the catalytic Proton acceptor.

The protein belongs to the RNase Z family. In terms of assembly, homodimer. Zn(2+) serves as cofactor.

It catalyses the reaction Endonucleolytic cleavage of RNA, removing extra 3' nucleotides from tRNA precursor, generating 3' termini of tRNAs. A 3'-hydroxy group is left at the tRNA terminus and a 5'-phosphoryl group is left at the trailer molecule.. Zinc phosphodiesterase, which displays some tRNA 3'-processing endonuclease activity. Probably involved in tRNA maturation, by removing a 3'-trailer from precursor tRNA. The protein is Ribonuclease Z of Marinobacter nauticus (strain ATCC 700491 / DSM 11845 / VT8) (Marinobacter aquaeolei).